Here is a 363-residue protein sequence, read N- to C-terminus: 3-dehydroquinate synthase (363 aa).

NAD(+)-binding positions include 72–77 (SGEKEK), 130–131 (TT), Lys-142, and Lys-151. 3 residues coordinate Zn(2+): Glu-184, His-247, and His-264.

This sequence belongs to the sugar phosphate cyclases superfamily. Dehydroquinate synthase family. Co(2+) serves as cofactor. Requires Zn(2+) as cofactor. NAD(+) is required as a cofactor.

It is found in the cytoplasm. It catalyses the reaction 7-phospho-2-dehydro-3-deoxy-D-arabino-heptonate = 3-dehydroquinate + phosphate. It participates in metabolic intermediate biosynthesis; chorismate biosynthesis; chorismate from D-erythrose 4-phosphate and phosphoenolpyruvate: step 2/7. Catalyzes the conversion of 3-deoxy-D-arabino-heptulosonate 7-phosphate (DAHP) to dehydroquinate (DHQ). This chain is 3-dehydroquinate synthase, found in Bacillus anthracis (strain A0248).